The chain runs to 134 residues: Thyrotropin subunit beta (134 aa).

An N-terminal signal peptide occupies residues 1 to 16; the sequence is MSPFFMMSLLFGLTFG. 6 disulfides stabilise this stretch: Cys-22-Cys-72, Cys-36-Cys-87, Cys-39-Cys-125, Cys-47-Cys-103, Cys-51-Cys-105, and Cys-108-Cys-115. Asn-43 carries N-linked (GlcNAc...) asparagine glycosylation.

The protein belongs to the glycoprotein hormones subunit beta family. In terms of assembly, heterodimer of a common alpha chain and a unique beta chain which confers biological specificity to thyrotropin, lutropin, follitropin and gonadotropin.

It localises to the secreted. In terms of biological role, indispensable for the control of thyroid structure and metabolism. This chain is Thyrotropin subunit beta (TSHB), found in Gallus gallus (Chicken).